The primary structure comprises 157 residues: MAGKPLRCISVGKLKTPFWKDAAAHYLTRIKRWRHLEYTEVRDGDAALPPDQRNALEGRRIVEALAPQDVALVLDEHGQKLSSPQLAALLRRLDQEARGRACFVVGGAWGLDDSVRQRAFKVLSLSDMTLPHELARVVLLEQIYRAECILRKVPYHH.

Residues leucine 74, glycine 106, and 125-130 (LSDMTL) contribute to the S-adenosyl-L-methionine site.

This sequence belongs to the RNA methyltransferase RlmH family. In terms of assembly, homodimer.

The protein localises to the cytoplasm. It carries out the reaction pseudouridine(1915) in 23S rRNA + S-adenosyl-L-methionine = N(3)-methylpseudouridine(1915) in 23S rRNA + S-adenosyl-L-homocysteine + H(+). In terms of biological role, specifically methylates the pseudouridine at position 1915 (m3Psi1915) in 23S rRNA. This is Ribosomal RNA large subunit methyltransferase H from Desulfovibrio desulfuricans (strain ATCC 27774 / DSM 6949 / MB).